A 464-amino-acid polypeptide reads, in one-letter code: Endo-1,4-beta-xylanase A (464 aa).

An N-terminal signal peptide occupies residues 1–33 (MFRHHPTRGRRTAGLLAAALATLSAGLTAVAPA). The GH10 domain maps to 40–349 (TATLGELAEA…KPAYHAIAAA (310 aa)). Residue Glu166 is the Proton donor of the active site. Glu271 serves as the catalytic Nucleophile. Residues 354 to 457 (SPAPGGNCTA…TPADVTCTPG (104 aa)) form the CBM2 domain.

Belongs to the glycosyl hydrolase 10 (cellulase F) family. Does not require any standard metal (Mg(2+), Mn2(+), Ca(2+)). is required as a cofactor.

It carries out the reaction Endohydrolysis of (1-&gt;4)-beta-D-xylosidic linkages in xylans.. It participates in glycan degradation; xylan degradation. Its activity is regulated as follows. Completely inhibited by Hg(2+), unaffected by EDTA. Contributes to hydrolysis of hemicellulose, the major component of plant cell-walls. Hydrolyzes xylan to xylose and xylobiose. The protein is Endo-1,4-beta-xylanase A (xynAS9) of Streptomyces sp.